Consider the following 248-residue polypeptide: MAAQSAPKVVLKSTTKMSLNERFTNMLKNKQPMPVNIWASMQQQQQLASARNRRLAQQMENRPSVQAALKLKQSLKQRLGKSNIQARLGRPIGALARGAIGGRSLPIIQRGLPRGGLRGGRATRTLLRGGMSLRGQNLLRGGRAVAPRMGLRRGGVRGRGGPGRGGLGRGAMGRGGIGGRGRGMIGRGRGGFGGRGRGRGRGRGALTRPVLTKEQLDNQLDAYMSKTKGHLDAELDAYMAQTDPETND.

A2 is modified (N-acetylalanine). Phosphoserine occurs at positions 40, 49, and 64. K70 participates in a covalent cross-link: Glycyl lysine isopeptide (Lys-Gly) (interchain with G-Cter in SUMO2). The segment at 151–204 is disordered; it reads LRRGGVRGRGGPGRGGLGRGAMGRGGIGGRGRGMIGRGRGGFGGRGRGRGRGRG. The interval 153 to 206 is interaction with PRMT1; sequence RGGVRGRGGPGRGGLGRGAMGRGGIGGRGRGMIGRGRGGFGGRGRGRGRGRGAL. The segment covering 157–195 has biased composition (gly residues); it reads RGRGGPGRGGLGRGAMGRGGIGGRGRGMIGRGRGGFGGR. The GAR motif; involved in 5hmC binding motif lies at 194 to 203; sequence GRGRGRGRGR. T242 is subject to Phosphothreonine.

As to quaternary structure, interacts with PRMT1 and PRMT5. Interacts with the 5FMC complex; the interaction is methylation-dependent. Interacts with FYTTD1, SET and PRC1 complex members CBX4, RNF2 and PHC2; the interactions are methylation-independent. Interacts with ZNF148. Interacts with WDR77 and ER. Post-translationally, asymmetrically methylated by PRMT1. Symmetrically methylated by PRMT5.

The protein resides in the nucleus. The protein localises to the nucleolus. Its subcellular location is the nucleoplasm. It is found in the nucleus speckle. Plays an important role in the ligand-dependent activation of estrogen receptor target genes. May play a role in the silencing of fetal globin genes. Recruits the 5FMC complex to ZNF148, leading to desumoylation of ZNF148 and subsequent transactivation of ZNF148 target genes. Required for the tumorigenicity of glioblastoma cells. Binds to 5-hydroxymethylcytosine (5hmC) and associates with the methylosome complex containing PRMT1, PRMT5, MEP50 and ERH. The CHTOP-methylosome complex associated with 5hmC methylates H4R3 and transactivates genes involved in glioblastomagenesis. In Rattus norvegicus (Rat), this protein is Chromatin target of PRMT1 protein (Chtop).